The chain runs to 213 residues: MMRPLPETGRRGLCLVVAAPSGAGKSSITRALLAEDPGLRLSVSVTTRAPRAGEQEGVHYYFRTQEEFDAMAAEGQLLEYARVFGRSYGTPRGPVQKALSEGSDVLFDVDWQGYHQLRSALPGDVVGIFVLPPSLDDLASRLEGRGDAPDIIAQRMAAARDEIAHVGEFPYVVVNTHLPEAIDQVRTILHAARTETKRQGWLRHWLGGLGLSE.

In terms of domain architecture, Guanylate kinase-like spans Gly12 to His190. Residue Ala19–Ser26 coordinates ATP.

It belongs to the guanylate kinase family.

It localises to the cytoplasm. The catalysed reaction is GMP + ATP = GDP + ADP. In terms of biological role, essential for recycling GMP and indirectly, cGMP. The sequence is that of Guanylate kinase from Granulibacter bethesdensis (strain ATCC BAA-1260 / CGDNIH1).